Reading from the N-terminus, the 145-residue chain is Large-conductance mechanosensitive channel (145 aa).

2 helical membrane-spanning segments follow: residues 16–36 (VVDL…VTSF) and 83–103 (GVFI…FMVI).

It belongs to the MscL family. In terms of assembly, homopentamer.

It is found in the cell inner membrane. Functionally, channel that opens in response to stretch forces in the membrane lipid bilayer. May participate in the regulation of osmotic pressure changes within the cell. This Geobacter metallireducens (strain ATCC 53774 / DSM 7210 / GS-15) protein is Large-conductance mechanosensitive channel.